The chain runs to 549 residues: Cytoplasmic trehalase (549 aa).

Substrate-binding positions include Arg168, Trp175–Asp176, Asn212, Arg221–Gln223, Arg292–Glu294, and Gly324. Active-site proton donor/acceptor residues include Asp326 and Glu509. Substrate is bound at residue Glu525.

The protein belongs to the glycosyl hydrolase 37 family. As to quaternary structure, monomer.

The protein resides in the cytoplasm. It carries out the reaction alpha,alpha-trehalose + H2O = alpha-D-glucose + beta-D-glucose. It functions in the pathway glycan degradation; trehalose degradation; D-glucose from alpha,alpha-trehalose: step 1/1. Its function is as follows. Hydrolyzes trehalose to glucose. Could be involved, in cells returning to low osmolarity conditions, in the utilization of the accumulated cytoplasmic trehalose, which was synthesized in response to high osmolarity. The chain is Cytoplasmic trehalase from Escherichia coli (strain 55989 / EAEC).